A 328-amino-acid chain; its full sequence is MVSQTSTATIGFTLEDFAALLDKYDYHFSPGDIVAGTVFSMESRGALIDIGAKTAAYIPIQEMSINRVDDPEEVLQPNETREFFILTDENEDGQLTLSIRRIEYMRAWERVRQLQAEDATVRSNVFATNRGGALVRIEGLRGFIPGSHISAREAKEDLVGEDLPLKFLEVDEERNRLVLSHRRALVERKMNGLEVAQVVVGSVRGIKPYGAFIDIGGVSGLLHISEISHDHIDTPHSVFNVNDEIKVMIIDLDAERGRISLSTKQLEPEPGAMLKDRDLVNEMADEMAEIFRQKRLAEAQGIPYEPPTSVDDTDDEEDESLAVSAVDE.

3 S1 motif domains span residues 31–100 (GDIV…LSIR), 118–182 (DATV…LSHR), and 196–264 (AQVV…LSTK). Residues 298-328 (EAQGIPYEPPTSVDDTDDEEDESLAVSAVDE) form a disordered region. The segment covering 311-328 (DDTDDEEDESLAVSAVDE) has biased composition (acidic residues).

The protein belongs to the bacterial ribosomal protein bS1 family.

Its function is as follows. Binds mRNA. The sequence is that of Small ribosomal subunit protein bS1A (rps1A) from Synechocystis sp. (strain ATCC 27184 / PCC 6803 / Kazusa).